The sequence spans 161 residues: 2-C-methyl-D-erythritol 2,4-cyclodiphosphate synthase (161 aa).

2 residues coordinate a divalent metal cation: Asp-9 and His-11. 4-CDP-2-C-methyl-D-erythritol 2-phosphate-binding positions include 9–11 (DFH) and 37–38 (HS). His-45 is a binding site for a divalent metal cation. 4-CDP-2-C-methyl-D-erythritol 2-phosphate contacts are provided by residues 59-61 (DIG), 64-68 (FPDTD), 135-138 (TTTE), and Arg-145.

Belongs to the IspF family. As to quaternary structure, homotrimer. A divalent metal cation serves as cofactor.

It catalyses the reaction 4-CDP-2-C-methyl-D-erythritol 2-phosphate = 2-C-methyl-D-erythritol 2,4-cyclic diphosphate + CMP. It functions in the pathway isoprenoid biosynthesis; isopentenyl diphosphate biosynthesis via DXP pathway; isopentenyl diphosphate from 1-deoxy-D-xylulose 5-phosphate: step 4/6. Its function is as follows. Involved in the biosynthesis of isopentenyl diphosphate (IPP) and dimethylallyl diphosphate (DMAPP), two major building blocks of isoprenoid compounds. Catalyzes the conversion of 4-diphosphocytidyl-2-C-methyl-D-erythritol 2-phosphate (CDP-ME2P) to 2-C-methyl-D-erythritol 2,4-cyclodiphosphate (ME-CPP) with a corresponding release of cytidine 5-monophosphate (CMP). The polypeptide is 2-C-methyl-D-erythritol 2,4-cyclodiphosphate synthase (Leptospira borgpetersenii serovar Hardjo-bovis (strain JB197)).